The sequence spans 679 residues: Glycine--tRNA ligase beta subunit (679 aa).

Belongs to the class-II aminoacyl-tRNA synthetase family. As to quaternary structure, tetramer of two alpha and two beta subunits.

It localises to the cytoplasm. The catalysed reaction is tRNA(Gly) + glycine + ATP = glycyl-tRNA(Gly) + AMP + diphosphate. The sequence is that of Glycine--tRNA ligase beta subunit from Streptococcus pyogenes serotype M3 (strain ATCC BAA-595 / MGAS315).